We begin with the raw amino-acid sequence, 491 residues long: UDP-N-acetylmuramate--L-alanine ligase (491 aa).

Position 126–132 (126–132 (GTHGKTT)) interacts with ATP.

It belongs to the MurCDEF family.

It is found in the cytoplasm. It carries out the reaction UDP-N-acetyl-alpha-D-muramate + L-alanine + ATP = UDP-N-acetyl-alpha-D-muramoyl-L-alanine + ADP + phosphate + H(+). The protein operates within cell wall biogenesis; peptidoglycan biosynthesis. Cell wall formation. This Salmonella choleraesuis (strain SC-B67) protein is UDP-N-acetylmuramate--L-alanine ligase.